The following is a 61-amino-acid chain: MAKKSLKVKQAKHQKFNVRNYTRCNHCGRPHAVLKKFGICRLCFRKFAYEGQIPGIKKASW.

4 residues coordinate Zn(2+): Cys24, Cys27, Cys40, and Cys43.

This sequence belongs to the universal ribosomal protein uS14 family. Zinc-binding uS14 subfamily. As to quaternary structure, part of the 30S ribosomal subunit. Contacts proteins S3 and S10. Zn(2+) serves as cofactor.

Its function is as follows. Binds 16S rRNA, required for the assembly of 30S particles and may also be responsible for determining the conformation of the 16S rRNA at the A site. The polypeptide is Small ribosomal subunit protein uS14 (Mycoplasma capricolum subsp. capricolum (strain California kid / ATCC 27343 / NCTC 10154)).